We begin with the raw amino-acid sequence, 282 residues long: Pantothenate synthetase (282 aa).

Residue 30-37 coordinates ATP; the sequence is MGALHAGH. The Proton donor role is filled by H37. Q61 is a binding site for (R)-pantoate. Residue Q61 participates in beta-alanine binding. Position 147–150 (147–150) interacts with ATP; that stretch reads GEKD. Residue Q153 coordinates (R)-pantoate. Residues V176 and 184 to 187 contribute to the ATP site; that span reads LSSR.

Belongs to the pantothenate synthetase family. In terms of assembly, homodimer.

The protein resides in the cytoplasm. The catalysed reaction is (R)-pantoate + beta-alanine + ATP = (R)-pantothenate + AMP + diphosphate + H(+). The protein operates within cofactor biosynthesis; (R)-pantothenate biosynthesis; (R)-pantothenate from (R)-pantoate and beta-alanine: step 1/1. Catalyzes the condensation of pantoate with beta-alanine in an ATP-dependent reaction via a pantoyl-adenylate intermediate. This Bacteroides fragilis (strain ATCC 25285 / DSM 2151 / CCUG 4856 / JCM 11019 / LMG 10263 / NCTC 9343 / Onslow / VPI 2553 / EN-2) protein is Pantothenate synthetase.